Consider the following 310-residue polypeptide: Methionyl-tRNA formyltransferase (310 aa).

(6S)-5,6,7,8-tetrahydrofolate is bound at residue 108 to 111; the sequence is SLLP.

The protein belongs to the Fmt family.

It carries out the reaction L-methionyl-tRNA(fMet) + (6R)-10-formyltetrahydrofolate = N-formyl-L-methionyl-tRNA(fMet) + (6S)-5,6,7,8-tetrahydrofolate + H(+). In terms of biological role, attaches a formyl group to the free amino group of methionyl-tRNA(fMet). The formyl group appears to play a dual role in the initiator identity of N-formylmethionyl-tRNA by promoting its recognition by IF2 and preventing the misappropriation of this tRNA by the elongation apparatus. This chain is Methionyl-tRNA formyltransferase, found in Fusobacterium nucleatum subsp. nucleatum (strain ATCC 25586 / DSM 15643 / BCRC 10681 / CIP 101130 / JCM 8532 / KCTC 2640 / LMG 13131 / VPI 4355).